The chain runs to 238 residues: DNA repair protein RecO (238 aa).

This sequence belongs to the RecO family.

Involved in DNA repair and RecF pathway recombination. This is DNA repair protein RecO from Anaplasma marginale (strain Florida).